We begin with the raw amino-acid sequence, 211 residues long: Arginine exporter protein ArgO (211 aa).

6 helical membrane-spanning segments follow: residues 1 to 21, 37 to 57, 68 to 88, 111 to 131, 147 to 167, and 182 to 202; these read MFTY…PLGP, LMIA…GIFG, LLAI…FGAL, IIIT…DTFV, WFAL…ALLA, and IINI…AKEG.

Belongs to the LysE/ArgO transporter (TC 2.A.75) family.

It localises to the cell inner membrane. It carries out the reaction L-arginine(in) = L-arginine(out). Involved in the export of arginine. Important to control the intracellular level of arginine and the correct balance between arginine and lysine. In Klebsiella pneumoniae (strain 342), this protein is Arginine exporter protein ArgO.